Reading from the N-terminus, the 623-residue chain is Arginine--tRNA ligase (623 aa).

Residues 116–126 (ANPIHPLHVGH) carry the 'HIGH' region motif.

It belongs to the class-I aminoacyl-tRNA synthetase family.

It localises to the cytoplasm. It catalyses the reaction tRNA(Arg) + L-arginine + ATP = L-arginyl-tRNA(Arg) + AMP + diphosphate. This Sulfurisphaera tokodaii (strain DSM 16993 / JCM 10545 / NBRC 100140 / 7) (Sulfolobus tokodaii) protein is Arginine--tRNA ligase.